We begin with the raw amino-acid sequence, 546 residues long: Choline/ethanolamine transporter FLVCR2 (546 aa).

Residues 1-84 are disordered; that stretch reads MVNESLNQEE…TLAQPSGLTH (84 aa). The Cytoplasmic portion of the chain corresponds to 1–93; sequence MVNESLNQEE…HPNELVKEDS (93 aa). The segment covering 22–49 has biased composition (polar residues); the sequence is QADTSYSTQPSVSIHPSVSGHPSVSIHP. Tandem repeats lie at residues 31–36, 37–42, 43–48, 49–54, 55–60, 61–66, and 67–72. Positions 31 to 84 are 9 X 6 AA tandem repeats of P-S-[VS]-S-[VIAG]-[HD]; it reads PSVSIHPSVSGHPSVSIHPSVSGHPSVSIDPSVSVHPSSSAHPSTLAQPSGLTH. The span at 54–74 shows a compositional bias: low complexity; sequence HPSVSIDPSVSVHPSSSAHPS. The 8; approximate repeat unit spans residues 73–78; the sequence is PSTLAQ. Residues 79-84 form a 9; approximate repeat; it reads PSGLTH. The chain crosses the membrane as a helical span at residues 94 to 118; it reads VIKVSKRRWAVVLVFSCYSLCNAFQ. Residues Asn-115, Ala-116, and Trp-119 each contribute to the choline site. Over 119–136 the chain is Extracellular; the sequence is WIQYGSINNIFMNFYGVS. Residues 137-164 form a helical membrane-spanning segment; the sequence is AFAIDWLSMCYMLTYIPLLLPVAWMLEK. Residues 165-166 are Cytoplasmic-facing; sequence FG. A helical transmembrane segment spans residues 167–186; it reads LRTIAITGSALNCLGAWVKL. Residues 187–193 are Extracellular-facing; sequence GSLEPHL. The helical transmembrane segment at 194–222 threads the bilayer; the sequence is FPVTMVGQVICSVAQVFILGMPSRIASVW. A choline-binding site is contributed by Leu-212. Topologically, residues 223–227 are cytoplasmic; it reads FGANE. The chain crosses the membrane as a helical span at residues 228-253; the sequence is VSTACSMAVFGNQLGIAIGFLVPPVL. The Extracellular segment spans residues 254–258; that stretch reads VPNIK. The helical transmembrane segment at 259-288 threads the bilayer; it reads DQEKLAYHISIMFYIIGGVATLLFILVIIV. At 289–324 the chain is on the cytoplasmic side; it reads FKEKPKYPPSRAQSLSYALATTDASYLSSIVRLFKN. A helical membrane pass occupies residues 325–355; sequence LNFVLLVITYGLNAGAFYALSTLLNRMVIMH. Tyr-342 provides a ligand contact to choline. Residues 356-359 lie on the Extracellular side of the membrane; that stretch reads FPGQ. The chain crosses the membrane as a helical span at residues 360 to 388; the sequence is EVNAGRIGLTIVIAGMFGAMISGIWLDKS. Residues 389-390 are Cytoplasmic-facing; the sequence is KT. The helical transmembrane segment at 391 to 413 threads the bilayer; that stretch reads YKETTLVVYIMTLVGMVVYTFTL. Residues 414-416 lie on the Extracellular side of the membrane; it reads NLN. A helical membrane pass occupies residues 417 to 446; the sequence is HLWIVFITADSLGFFMTGYLPLGFEFAVEL. Over 447 to 454 the chain is Cytoplasmic; sequence TYPESEGV. A helical transmembrane segment spans residues 455–480; sequence SSGLLNVSAQVFGIIFTISQGQIIDN. Gln-464 is a binding site for choline. Residues 481–482 are Extracellular-facing; the sequence is YG. Residues 483–505 traverse the membrane as a helical segment; the sequence is SVPGNIFLCVFLALGSALTAFIK. Residues 506–546 are Cytoplasmic-facing; the sequence is SDLRRQRANKDAPETKVQEEEEEEEESNTSKVPTVLSEAHL. Positions 511 to 523 are enriched in basic and acidic residues; the sequence is QRANKDAPETKVQ. Residues 511 to 546 form a disordered region; that stretch reads QRANKDAPETKVQEEEEEEEESNTSKVPTVLSEAHL. Ser-535 bears the Phosphoserine mark.

It belongs to the major facilitator superfamily. Feline leukemia virus subgroup C receptor (TC 2.A.1.28.1) family. Interacts with components of electron transfer chain complexes III, IV and V including CYC1, NDUFA4, COX4I1, ATP5PD and ATP5F1C; these interactions occur in the absence of heme and are disrupted upon heme binding. Interacts with ATP2A2; this interaction occurs in the absence of heme and promotes ATP2A2 proteasomal degradation; the complex is dissociated upon heme binding. Interacts with HMOX1; this interaction is potentiated in the presence of heme.

It is found in the cell membrane. The protein localises to the mitochondrion membrane. The protein resides in the endoplasmic reticulum membrane. It catalyses the reaction choline(out) = choline(in). It carries out the reaction ethanolamine(in) = ethanolamine(out). The enzyme catalyses heme b(in) = heme b(out). Functionally, choline uniporter that specifically mediates choline uptake at the blood-brain-barrier. Responsible for the majority of choline uptake across the blood-brain-barrier from the circulation into the brain. Choline, a nutrient critical for brain development, is a precursor of phosphatidylcholine, as well as betaine. Also mediates transport of ethanolamine. Choline and ethanolamine transport is not coupled with proton transport and is exclusively driven by the choline gradient across the plasma membrane. However, the presence of an inwardly directed proton gradient enhances choline uptake. Also acts as a heme b transporter. Required to regulate mitochondrial respiration processes, ATP synthesis and thermogenesis. At low heme levels, interacts with components of electron transfer chain (ETC) complexes and ATP2A2, leading to ubiquitin-mediated degradation of ATP2A2 and inhibition of thermogenesis. Upon heme binding, dissociates from ETC complexes to allow switching from mitochondrial ATP synthesis to thermogenesis. This chain is Choline/ethanolamine transporter FLVCR2 (Flvcr2), found in Rattus norvegicus (Rat).